Here is a 238-residue protein sequence, read N- to C-terminus: Small ribosomal subunit protein uS2 (238 aa).

Belongs to the universal ribosomal protein uS2 family.

The sequence is that of Small ribosomal subunit protein uS2 from Synechococcus sp. (strain CC9311).